The following is a 193-amino-acid chain: Urease accessory protein UreE (193 aa).

Residues arginine 138 to aspartate 193 are disordered. Residues histidine 147–aspartate 193 show a composition bias toward basic and acidic residues.

This sequence belongs to the UreE family.

The protein resides in the cytoplasm. Its function is as follows. Involved in urease metallocenter assembly. Binds nickel. Probably functions as a nickel donor during metallocenter assembly. The protein is Urease accessory protein UreE of Rhizobium leguminosarum bv. trifolii (strain WSM2304).